A 93-amino-acid chain; its full sequence is Small ribosomal subunit protein uS19 (93 aa).

Disordered stretches follow at residues 1–25 and 74–93; these read MPRS…QNTK and FAPT…ARRR. Basic and acidic residues-rich tracts occupy residues 14 to 23 and 81 to 93; these read HLQKKVDDQN and RGHD…ARRR.

The protein belongs to the universal ribosomal protein uS19 family.

Functionally, protein S19 forms a complex with S13 that binds strongly to the 16S ribosomal RNA. The protein is Small ribosomal subunit protein uS19 of Beutenbergia cavernae (strain ATCC BAA-8 / DSM 12333 / CCUG 43141 / JCM 11478 / NBRC 16432 / NCIMB 13614 / HKI 0122).